The sequence spans 140 residues: Small ribosomal subunit protein uS12 (140 aa).

A disordered region spans residues 33-55; the sequence is KEQTNVSSPQKRGVCTRVGTMTP. 3-methylthioaspartic acid is present on Asp-102.

It belongs to the universal ribosomal protein uS12 family. Part of the 30S ribosomal subunit. Contacts proteins S8 and S17. May interact with IF1 in the 30S initiation complex.

Functionally, with S4 and S5 plays an important role in translational accuracy. Interacts with and stabilizes bases of the 16S rRNA that are involved in tRNA selection in the A site and with the mRNA backbone. Located at the interface of the 30S and 50S subunits, it traverses the body of the 30S subunit contacting proteins on the other side and probably holding the rRNA structure together. The combined cluster of proteins S8, S12 and S17 appears to hold together the shoulder and platform of the 30S subunit. The protein is Small ribosomal subunit protein uS12 of Geobacillus thermodenitrificans (strain NG80-2).